Consider the following 93-residue polypeptide: Co-chaperonin GroES (93 aa).

The protein belongs to the GroES chaperonin family. Heptamer of 7 subunits arranged in a ring. Interacts with the chaperonin GroEL.

It localises to the cytoplasm. Functionally, together with the chaperonin GroEL, plays an essential role in assisting protein folding. The GroEL-GroES system forms a nano-cage that allows encapsulation of the non-native substrate proteins and provides a physical environment optimized to promote and accelerate protein folding. GroES binds to the apical surface of the GroEL ring, thereby capping the opening of the GroEL channel. The protein is Co-chaperonin GroES of Streptococcus gordonii (strain Challis / ATCC 35105 / BCRC 15272 / CH1 / DL1 / V288).